A 165-amino-acid polypeptide reads, in one-letter code: 2-C-methyl-D-erythritol 2,4-cyclodiphosphate synthase (165 aa).

Asp12 and His14 together coordinate a divalent metal cation. 4-CDP-2-C-methyl-D-erythritol 2-phosphate-binding positions include 12–14 (DVH) and 38–39 (HS). An a divalent metal cation-binding site is contributed by His46. 4-CDP-2-C-methyl-D-erythritol 2-phosphate-binding positions include 60 to 62 (DIG), 65 to 69 (FPDTD), Phe143, and Arg146.

It belongs to the IspF family. Homotrimer. Requires a divalent metal cation as cofactor.

It catalyses the reaction 4-CDP-2-C-methyl-D-erythritol 2-phosphate = 2-C-methyl-D-erythritol 2,4-cyclic diphosphate + CMP. It functions in the pathway isoprenoid biosynthesis; isopentenyl diphosphate biosynthesis via DXP pathway; isopentenyl diphosphate from 1-deoxy-D-xylulose 5-phosphate: step 4/6. In terms of biological role, involved in the biosynthesis of isopentenyl diphosphate (IPP) and dimethylallyl diphosphate (DMAPP), two major building blocks of isoprenoid compounds. Catalyzes the conversion of 4-diphosphocytidyl-2-C-methyl-D-erythritol 2-phosphate (CDP-ME2P) to 2-C-methyl-D-erythritol 2,4-cyclodiphosphate (ME-CPP) with a corresponding release of cytidine 5-monophosphate (CMP). The chain is 2-C-methyl-D-erythritol 2,4-cyclodiphosphate synthase from Aromatoleum aromaticum (strain DSM 19018 / LMG 30748 / EbN1) (Azoarcus sp. (strain EbN1)).